Consider the following 368-residue polypeptide: N-acetylneuraminate epimerase (368 aa).

Positions 1–19 (MNKTIMALAIMMASFAANA) are cleaved as a signal peptide. Kelch repeat units lie at residues 40 to 84 (TVYI…AFID), 86 to 137 (NLYV…FVHN), 139 to 173 (KAYV…KINA), 174 to 219 (HYFD…VNKG), 222 to 265 (TWLI…VAGG), 287 to 336 (ENYQ…PWNN), and 338 to 367 (LLII…VTVQ). Glu228 (proton acceptor) is an active-site residue.

This sequence belongs to the NanM family. In terms of assembly, homodimer.

The protein resides in the periplasm. The enzyme catalyses N-acetyl-alpha-neuraminate = N-acetyl-beta-neuraminate. Its function is as follows. Converts alpha-N-acetylneuranimic acid (Neu5Ac) to the beta-anomer, accelerating the equilibrium between the alpha- and beta-anomers. Probably facilitates sialidase-negative bacteria to compete successfully for limited amounts of extracellular Neu5Ac, which is likely taken up in the beta-anomer. In addition, the rapid removal of sialic acid from solution might be advantageous to the bacterium to damp down host responses. This is N-acetylneuraminate epimerase from Shigella sonnei (strain Ss046).